A 461-amino-acid polypeptide reads, in one-letter code: Phosphomethylpyrimidine synthase (461 aa).

Substrate contacts are provided by residues Asn80, Met109, Tyr138, His173, 193 to 195 (SRG), 234 to 237 (DGLR), and Glu273. His277 is a Zn(2+) binding site. Residue Tyr300 participates in substrate binding. Residue His341 participates in Zn(2+) binding. The [4Fe-4S] cluster site is built by Cys421, Cys424, and Cys429.

Belongs to the ThiC family. [4Fe-4S] cluster is required as a cofactor.

The catalysed reaction is 5-amino-1-(5-phospho-beta-D-ribosyl)imidazole + S-adenosyl-L-methionine = 4-amino-2-methyl-5-(phosphooxymethyl)pyrimidine + CO + 5'-deoxyadenosine + formate + L-methionine + 3 H(+). It functions in the pathway cofactor biosynthesis; thiamine diphosphate biosynthesis. Its function is as follows. Catalyzes the synthesis of the hydroxymethylpyrimidine phosphate (HMP-P) moiety of thiamine from aminoimidazole ribotide (AIR) in a radical S-adenosyl-L-methionine (SAM)-dependent reaction. The protein is Phosphomethylpyrimidine synthase of Solibacter usitatus (strain Ellin6076).